We begin with the raw amino-acid sequence, 200 residues long: Bombinin-like peptides 3 (200 aa).

Positions 1 to 16 (MNFKYIVAVSILIASA) form a signal peptide, or 18. 2 positions are modified to phenylalanine amide: phenylalanine 68 and phenylalanine 129.

The protein belongs to the bombinin family. As to expression, expressed by the skin glands.

The protein localises to the secreted. In terms of biological role, has antimicrobial activity, but no hemolytic activity. Preference on killing Gram-negative non-enteric bacteria. The sequence is that of Bombinin-like peptides 3 from Bombina orientalis (Oriental fire-bellied toad).